A 256-amino-acid chain; its full sequence is Imidazole glycerol phosphate synthase subunit HisF (256 aa).

Residues aspartate 12 and aspartate 131 contribute to the active site.

It belongs to the HisA/HisF family. Heterodimer of HisH and HisF.

The protein localises to the cytoplasm. It carries out the reaction 5-[(5-phospho-1-deoxy-D-ribulos-1-ylimino)methylamino]-1-(5-phospho-beta-D-ribosyl)imidazole-4-carboxamide + L-glutamine = D-erythro-1-(imidazol-4-yl)glycerol 3-phosphate + 5-amino-1-(5-phospho-beta-D-ribosyl)imidazole-4-carboxamide + L-glutamate + H(+). The protein operates within amino-acid biosynthesis; L-histidine biosynthesis; L-histidine from 5-phospho-alpha-D-ribose 1-diphosphate: step 5/9. Functionally, IGPS catalyzes the conversion of PRFAR and glutamine to IGP, AICAR and glutamate. The HisF subunit catalyzes the cyclization activity that produces IGP and AICAR from PRFAR using the ammonia provided by the HisH subunit. This chain is Imidazole glycerol phosphate synthase subunit HisF, found in Pseudomonas putida (strain GB-1).